A 195-amino-acid chain; its full sequence is MSTIVIAVIALAALAAVFGAILGFASIRFKVEADPIVDQIDAILPQTQCGQCGYPGCRPYAEAIANGDAINKCPPGGQATIEKLADLMGVEVQDSAHDLDNKVKMVAFIHEDMCIGCTKCIQACPVDAIVGGNKAVHTVIKNECTGCDLCVAPCPTDCIEMIPVQTTPESWKWQLNAIPVVNVTDSAPAAQKSAN.

At 1–3 (MST) the chain is on the periplasmic side. Residues 4–24 (IVIAVIALAALAAVFGAILGF) form a helical membrane-spanning segment. Residues 25 to 195 (ASIRFKVEAD…SAPAAQKSAN (171 aa)) lie on the Cytoplasmic side of the membrane. Residues 32 to 90 (EADPIVDQIDAILPQTQCGQCGYPGCRPYAEAIANGDAINKCPPGGQATIEKLADLMGV) enclose the 4Fe-4S domain. [4Fe-4S] cluster contacts are provided by C49, C52, C57, C73, C114, C117, C120, C124, C144, C147, C150, and C154. 4Fe-4S ferredoxin-type domains lie at 105–134 (MVAFIHEDMCIGCTKCIQACPVDAIVGGNK) and 135–164 (AVHTVIKNECTGCDLCVAPCPTDCIEMIPV).

This sequence belongs to the 4Fe4S bacterial-type ferredoxin family. RnfB subfamily. As to quaternary structure, the complex is composed of six subunits: RnfA, RnfB, RnfC, RnfD, RnfE and RnfG. [4Fe-4S] cluster serves as cofactor.

Its subcellular location is the cell inner membrane. Functionally, part of a membrane-bound complex that couples electron transfer with translocation of ions across the membrane. In Vibrio cholerae serotype O1 (strain ATCC 39541 / Classical Ogawa 395 / O395), this protein is Ion-translocating oxidoreductase complex subunit B.